We begin with the raw amino-acid sequence, 423 residues long: Histidine--tRNA ligase (423 aa).

This sequence belongs to the class-II aminoacyl-tRNA synthetase family. Homodimer.

It localises to the cytoplasm. The catalysed reaction is tRNA(His) + L-histidine + ATP = L-histidyl-tRNA(His) + AMP + diphosphate + H(+). This Bacillus cytotoxicus (strain DSM 22905 / CIP 110041 / 391-98 / NVH 391-98) protein is Histidine--tRNA ligase.